Consider the following 215-residue polypeptide: MGQKINPLGFRLGATQGHHSLWFAQPKNYSEDLQEDQKIRDCIKNYIKKNMKIFSSVEGIACIEIQKRIDLIQVIIYMGFPKLLIEHQKIEELQMNIQKELNSVNRKLNMAITRIANPYGHPNILAEFIAGQLKNRVSFRKAMKKAIELTEQAGTKGIQIQIAGRIDGKEIARVEWIREGRVPLQTIKAKIDYCSYTVRTIYGALGIKIWIFVDE.

The region spanning 43–116 (IKNYIKKNMK…KLNMAITRIA (74 aa)) is the KH type-2 domain.

It belongs to the universal ribosomal protein uS3 family. As to quaternary structure, part of the 30S ribosomal subunit.

The protein localises to the plastid. The protein resides in the chloroplast. This Morus indica (Mulberry) protein is Small ribosomal subunit protein uS3c (rps3).